The primary structure comprises 585 residues: MRKTKIVCTIGPASESVEKLTQLMEAGMNVARLNFSHGDFEEHGARIKNIREAAGKLGKDIGILLDTKGPEIRTHTMENGSIELAAGSQLIVSMDEVIGTPDKISVTYDGLIHDVSVGSTILLDDGLVGLEVTDINKDKREIVTKVMNSGTLKNKKGVNVPGVSVNLPGITEKDANDIVFGIEQGVDFIAASFVRRPSDVLEIRELLEEHNAADIQIIPKIENQEGVDNIDAILEVSDGLMVARGDLGVEIPAEEVPLVQKELIKKCNALGKPVITATQMLDSMQRNPRPTRAEASDVANAIFDGTDAIMLSGETAAGNYPVEAVQTMHNIASRSEEALNHKKILSARSKQVSMSITDAIGQSVAHTAINLDVNAIVTPTESGHTARMISKYRPQAPIVAVTVNDAVSRKLSLVFGVFATSGQNHSSTDEMLEKAVQKSLDTGIVRHGDLIVITAGAVGEAGTTNLMKVYVVGDVVAKGQGIGRKSAFGEVVIAQNAQEAAKKMKDGAVLVTKSTDRDMMASLEKAAALITEEGGLTSHAAVVGLSLGIPVIVGMENATSILKEGEDITVDSARGAVYKGRASVL.

Position 32 (R32) interacts with substrate. 4 residues coordinate K(+): N34, S36, D66, and T67. 34–37 (NFSH) is a binding site for ATP. Residues R73 and K156 each contribute to the ATP site. Residue E222 coordinates Mg(2+). Residues G245, D246, and T278 each contribute to the substrate site. D246 serves as a coordination point for Mg(2+).

This sequence belongs to the pyruvate kinase family. In the C-terminal section; belongs to the PEP-utilizing enzyme family. Homotetramer. The cofactor is Mg(2+). It depends on K(+) as a cofactor.

It catalyses the reaction pyruvate + ATP = phosphoenolpyruvate + ADP + H(+). Its pathway is carbohydrate degradation; glycolysis; pyruvate from D-glyceraldehyde 3-phosphate: step 5/5. This chain is Pyruvate kinase (pyk), found in Bacillus licheniformis.